The following is a 511-amino-acid chain: UPF0288 protein MK0796 (511 aa).

It belongs to the UPF0288 family.

This Methanopyrus kandleri (strain AV19 / DSM 6324 / JCM 9639 / NBRC 100938) protein is UPF0288 protein MK0796.